Reading from the N-terminus, the 492-residue chain is Trypanothione reductase (492 aa).

36 to 52 is a binding site for FAD; that stretch reads DVQMVHGPPFFSALGGT. A disulfide bond links Cys53 and Cys58. His461 serves as the catalytic Proton acceptor.

The protein belongs to the class-I pyridine nucleotide-disulfide oxidoreductase family. As to quaternary structure, homodimer. It depends on FAD as a cofactor.

The protein resides in the cytoplasm. It catalyses the reaction trypanothione + NADP(+) = trypanothione disulfide + NADPH + H(+). Trypanothione is the parasite analog of glutathione; this enzyme is the equivalent of glutathione reductase. The sequence is that of Trypanothione reductase (TPR) from Trypanosoma cruzi.